The chain runs to 446 residues: Exodeoxyribonuclease 7 large subunit (446 aa).

This sequence belongs to the XseA family. Heterooligomer composed of large and small subunits.

It localises to the cytoplasm. The catalysed reaction is Exonucleolytic cleavage in either 5'- to 3'- or 3'- to 5'-direction to yield nucleoside 5'-phosphates.. Bidirectionally degrades single-stranded DNA into large acid-insoluble oligonucleotides, which are then degraded further into small acid-soluble oligonucleotides. The protein is Exodeoxyribonuclease 7 large subunit of Streptococcus pneumoniae serotype 19F (strain G54).